A 198-amino-acid chain; its full sequence is MPLNLLKHKSWNVYNEKNIERVRRDEELARLSADKEQAKNDLEESKRRIARLRGTVYEEDSKETEPKVEFANFWAEQEEKERKRQKVYSENRHDLEIMKERHGLGPLPWYMKTDKISIDETSNNMSSKYRAPQDDPMFLVEKLLSNRKTKNPESDRRRQSRKKKSTQIQASDEMKHRRHHVHKVHHYSQKQSSSTTRR.

A coiled-coil region spans residues 20 to 58 (ERVRRDEELARLSADKEQAKNDLEESKRRIARLRGTVYE). Residues 144–198 (LSNRKTKNPESDRRRQSRKKKSTQIQASDEMKHRRHHVHKVHHYSQKQSSSTTRR) form a disordered region. The span at 176–188 (HRRHHVHKVHHYS) shows a compositional bias: basic residues. The segment covering 189 to 198 (QKQSSSTTRR) has biased composition (polar residues).

It is found in the nucleus. The protein resides in the nucleolus. This is an uncharacterized protein from Schizosaccharomyces pombe (strain 972 / ATCC 24843) (Fission yeast).